The following is a 164-amino-acid chain: UPF0304 protein YfbU (164 aa).

Belongs to the UPF0304 family.

The chain is UPF0304 protein YfbU from Shigella flexneri.